The primary structure comprises 440 residues: MRKIIVVGAVAGGATCASQIRRLDKDSEITIFEKDRDMSFANCGLPYFIGNIVNERKDVLPITPDVFKEKKDITVKTYHEVIAINDKDQTVTVVNRQTNEKFEASYDKLILSPGAGANSLGFDSDYIFTLRNMEDTDAIDQFIDQHQAKKALVVGAGYISLEVLENLYARGLDVTLIHRSEKVNKLMDQDMNQVIFDELDSRHIPYRLNEEIVSVKDHLVTFKSGIQEDFDIIIEGVGTHPHSKFIESSNVALDDKGFVKVNDKFETNIPNIYALGDVITSTYRHVNLPAQVPLAWGAHRGASVIAEQLAGNKNIIFKGFLGTNIVKFFDYTLASVGIKVEELTHFDYQMVELNSGTHAGYYPGNTNVHLRVYFDTNNRHLLRAAAVGKTGVDKRIDVLSMAMMSELTIDELTEFEVAYAPPYSHPKDLVNMIGYKARDL.

FAD is bound at residue 8-33 (GAVAGGATCASQIRRLDKDSEITIFE). 5 residues coordinate substrate: threonine 15, glutamine 19, arginine 22, serine 39, and asparagine 42. Residue cysteine 43 is the Nucleophile of the active site. Cysteine 43 acts as the Redox-active in catalysis. Residue lysine 71 coordinates substrate. 151–166 (ALVVGAGYISLEVLEN) is an NADP(+) binding site. Position 267-277 (267-277 (TNIPNIYALGD)) interacts with FAD. Histidine 299 is a substrate binding site. Tyrosine 419 lines the FAD pocket. Lysine 427 serves as a coordination point for substrate.

It belongs to the class-III pyridine nucleotide-disulfide oxidoreductase family. Homodimer. It depends on FAD as a cofactor.

The enzyme catalyses NADP(+) + 2 CoA = CoA-disulfide + NADPH + H(+). In terms of biological role, catalyzes specifically the NADPH-dependent reduction of coenzyme A disulfide. The sequence is that of Coenzyme A disulfide reductase from Staphylococcus haemolyticus (strain JCSC1435).